A 362-amino-acid polypeptide reads, in one-letter code: MTPAGKRILVMAGGTGGHVFPALAVAKYLAQQGWQVRWLGTADRMEARLVPQYGFDIDFIDIKGVRGNGLIRKLAAPFKVVRSILQAKAVIAEFKPDVVLGMGGFASGPGGVAARLAGIPLVLHEQNAIPGMTNKLLSRIATQVLCAFKNTFTTVKAKVVGNPIRQELIALGAEPKPEADEALKVLVVGGSLGAKVFNDLMPEAVAILSQQQFVTVWHQVGKDNLTGVKAAYQQHGQDGGVNIAEFIDDMEAAYRWADVVLCRAGALTVSELAAVGLPSILVPYPHAVDDHQTRNGQVLVEAGAAFLLPQAILDVNKLAGKLQLLANDRTELARMGQRARDVAVLDATEQVAAVCISLAEKG.

UDP-N-acetyl-alpha-D-glucosamine is bound by residues 15 to 17, Asn-127, Arg-165, Ser-191, Ile-247, 266 to 271, and Gln-292; these read TGG and ALTVSE.

Belongs to the glycosyltransferase 28 family. MurG subfamily.

Its subcellular location is the cell inner membrane. It carries out the reaction di-trans,octa-cis-undecaprenyl diphospho-N-acetyl-alpha-D-muramoyl-L-alanyl-D-glutamyl-meso-2,6-diaminopimeloyl-D-alanyl-D-alanine + UDP-N-acetyl-alpha-D-glucosamine = di-trans,octa-cis-undecaprenyl diphospho-[N-acetyl-alpha-D-glucosaminyl-(1-&gt;4)]-N-acetyl-alpha-D-muramoyl-L-alanyl-D-glutamyl-meso-2,6-diaminopimeloyl-D-alanyl-D-alanine + UDP + H(+). The protein operates within cell wall biogenesis; peptidoglycan biosynthesis. Cell wall formation. Catalyzes the transfer of a GlcNAc subunit on undecaprenyl-pyrophosphoryl-MurNAc-pentapeptide (lipid intermediate I) to form undecaprenyl-pyrophosphoryl-MurNAc-(pentapeptide)GlcNAc (lipid intermediate II). In Shewanella baltica (strain OS155 / ATCC BAA-1091), this protein is UDP-N-acetylglucosamine--N-acetylmuramyl-(pentapeptide) pyrophosphoryl-undecaprenol N-acetylglucosamine transferase.